The sequence spans 211 residues: Protein-methionine-sulfoxide reductase heme-binding subunit MsrQ (211 aa).

The next 5 helical transmembrane spans lie at 45 to 65 (HFTGLTALKFLLAALLITPLA), 82 to 102 (LWCFAWATLHLTSYALLELGV), 116 to 136 (PYLTLGIISWVILLALAFTST), 153 to 173 (FVYLVAILAPIHYLWSVKIIS), and 178 to 198 (IYAGLAVLLLALRYKKLLSLF).

It belongs to the MsrQ family. Heterodimer of a catalytic subunit (MsrP) and a heme-binding subunit (MsrQ). FMN serves as cofactor. It depends on heme b as a cofactor.

The protein resides in the cell inner membrane. In terms of biological role, part of the MsrPQ system that repairs oxidized periplasmic proteins containing methionine sulfoxide residues (Met-O), using respiratory chain electrons. Thus protects these proteins from oxidative-stress damage caused by reactive species of oxygen and chlorine generated by the host defense mechanisms. MsrPQ is essential for the maintenance of envelope integrity under bleach stress, rescuing a wide series of structurally unrelated periplasmic proteins from methionine oxidation, including the primary periplasmic chaperone SurA and the lipoprotein Pal. MsrQ provides electrons for reduction to the reductase catalytic subunit MsrP, using the quinone pool of the respiratory chain. This Escherichia coli O127:H6 (strain E2348/69 / EPEC) protein is Protein-methionine-sulfoxide reductase heme-binding subunit MsrQ.